The sequence spans 778 residues: Tubulin polyglutamylase ttll6 (778 aa).

Residues 1 to 43 form a disordered region; sequence MGTPAERSVSEVCRCEPDPGLEGEGWGSDTHAEPSNTPIPLPV. In terms of domain architecture, TTL spans 51–393; the sequence is KKKLWINLTN…LGACDRRKIT (343 aa). ATP is bound by residues Lys168, 174-175, 196-199, and 209-211; these read QG, QVYM, and KFD. Gln174 serves as a coordination point for a protein. Arg235 lines the L-glutamate pocket. 257–258 contacts ATP; that stretch reads TN. L-glutamate contacts are provided by Tyr259 and Lys277. Mg(2+) contacts are provided by Asp340, Glu353, and Asn355. His356 serves as a coordination point for a protein. The interval 365-445 is c-MTBD region; it reads RLDREVKDSL…MGGFRRIFPR (81 aa). Residue Lys371 participates in L-glutamate binding. Basic and acidic residues-rich tracts occupy residues 402–418, 485–510, 533–542, and 760–778; these read ERLQ…EEPR, KQEQ…GEKV, SVREETPVSL, and LSHD…EHSL. Disordered stretches follow at residues 402–422, 485–542, and 758–778; these read ERLQ…QSQA, KQEQ…PVSL, and PHLS…EHSL.

This sequence belongs to the tubulin--tyrosine ligase family. Requires Mg(2+) as cofactor.

It localises to the cytoplasm. The protein localises to the cytoskeleton. Its subcellular location is the cilium axoneme. The protein resides in the cilium basal body. It catalyses the reaction L-glutamyl-[protein] + L-glutamate + ATP = gamma-L-glutamyl-L-glutamyl-[protein] + ADP + phosphate + H(+). It carries out the reaction (L-glutamyl)(n)-gamma-L-glutamyl-L-glutamyl-[protein] + L-glutamate + ATP = (L-glutamyl)(n+1)-gamma-L-glutamyl-L-glutamyl-[protein] + ADP + phosphate + H(+). Functionally, polyglutamylase which modifies both tubulin and non-tubulin proteins, generating alpha-linked polyglutamate side chains on the gamma-carboxyl group of specific glutamate residues of target proteins. Preferentially mediates ATP-dependent long polyglutamate chain elongation over the initiation step of the polyglutamylation reaction. Preferentially modifies the alpha-tubulin tail over a beta-tail. Mediates microtubule polyglutamylation in cilia axoneme, which is important for ciliary structural formation and motility. Polyglutamylates olfactory cilia, necessary for the regulation of ciliary structure and beating. The polypeptide is Tubulin polyglutamylase ttll6 (Danio rerio (Zebrafish)).